We begin with the raw amino-acid sequence, 567 residues long: DNA ligase (567 aa).

Glu-260 is an ATP binding site. Catalysis depends on Lys-262, which acts as the N6-AMP-lysine intermediate. The ATP site is built by Arg-267, Arg-282, Glu-312, Phe-352, Arg-427, and Lys-433.

It belongs to the ATP-dependent DNA ligase family. The cofactor is Mg(2+).

The enzyme catalyses ATP + (deoxyribonucleotide)n-3'-hydroxyl + 5'-phospho-(deoxyribonucleotide)m = (deoxyribonucleotide)n+m + AMP + diphosphate.. DNA ligase that seals nicks in double-stranded DNA during DNA replication, DNA recombination and DNA repair. This is DNA ligase from Methanococcoides burtonii (strain DSM 6242 / NBRC 107633 / OCM 468 / ACE-M).